The chain runs to 172 residues: Shikimate kinase (172 aa).

11–16 is an ATP binding site; the sequence is GAGKST. S15 provides a ligand contact to Mg(2+). Positions 33, 57, and 79 each coordinate substrate. Residue R117 participates in ATP binding. R136 is a substrate binding site. R153 contacts ATP.

Belongs to the shikimate kinase family. In terms of assembly, monomer. It depends on Mg(2+) as a cofactor.

It is found in the cytoplasm. The catalysed reaction is shikimate + ATP = 3-phosphoshikimate + ADP + H(+). It participates in metabolic intermediate biosynthesis; chorismate biosynthesis; chorismate from D-erythrose 4-phosphate and phosphoenolpyruvate: step 5/7. Its function is as follows. Catalyzes the specific phosphorylation of the 3-hydroxyl group of shikimic acid using ATP as a cosubstrate. This chain is Shikimate kinase, found in Pseudomonas putida (strain ATCC 700007 / DSM 6899 / JCM 31910 / BCRC 17059 / LMG 24140 / F1).